The following is a 164-amino-acid chain: DNA-directed RNA polymerase 19 kDa subunit (164 aa).

The span at 1–35 (MADTDDIIDYESDDLTEYEDDDEEEEDGESLETSD) shows a compositional bias: acidic residues. A disordered region spans residues 1–39 (MADTDDIIDYESDDLTEYEDDDEEEEDGESLETSDIDPK).

This sequence belongs to the poxviridae DNA-directed RNA polymerase 19 kDa subunit family. The DNA-dependent RNA polymerase used for intermediate and late genes expression consists of eight subunits Rpo30/OPG66, Rpo7/OPG90, Rpo22/OPG103, Rpo147/OPG105, Rpo18/OPG119, Rpo19/OPG131, Rpo132/OPG151 and Rpo35/OPG156. The same holoenzyme, with the addition of the transcription-specificity factor OPG109, is used for early gene expression.

The protein resides in the virion. It catalyses the reaction RNA(n) + a ribonucleoside 5'-triphosphate = RNA(n+1) + diphosphate. Its function is as follows. Part of the DNA-dependent RNA polymerase which catalyzes the transcription of viral DNA into RNA using the four ribonucleoside triphosphates as substrates. Responsible for the transcription of early, intermediate and late genes. DNA-dependent RNA polymerase associates with the early transcription factor (ETF), itself composed of OPG118 and OPG133, thereby allowing the early genes transcription. Late transcription, and probably also intermediate transcription, require newly synthesized RNA polymerase. This chain is DNA-directed RNA polymerase 19 kDa subunit (OPG131), found in Variola virus (isolate Human/India/Ind3/1967) (VARV).